We begin with the raw amino-acid sequence, 398 residues long: 1-deoxy-D-xylulose 5-phosphate reductoisomerase (398 aa).

Thr13, Gly14, Ser15, Ile16, Arg40, and Asn127 together coordinate NADPH. Lys128 is a 1-deoxy-D-xylulose 5-phosphate binding site. Residue Glu129 coordinates NADPH. Residue Asp153 participates in Mn(2+) binding. The 1-deoxy-D-xylulose 5-phosphate site is built by Ser154, Glu155, Ser188, and His211. Residue Glu155 coordinates Mn(2+). Residue Gly217 participates in NADPH binding. 4 residues coordinate 1-deoxy-D-xylulose 5-phosphate: Ser224, Asn229, Lys230, and Glu233. Residue Glu233 participates in Mn(2+) binding.

Belongs to the DXR family. Mg(2+) serves as cofactor. It depends on Mn(2+) as a cofactor.

It carries out the reaction 2-C-methyl-D-erythritol 4-phosphate + NADP(+) = 1-deoxy-D-xylulose 5-phosphate + NADPH + H(+). Its pathway is isoprenoid biosynthesis; isopentenyl diphosphate biosynthesis via DXP pathway; isopentenyl diphosphate from 1-deoxy-D-xylulose 5-phosphate: step 1/6. Its function is as follows. Catalyzes the NADPH-dependent rearrangement and reduction of 1-deoxy-D-xylulose-5-phosphate (DXP) to 2-C-methyl-D-erythritol 4-phosphate (MEP). This chain is 1-deoxy-D-xylulose 5-phosphate reductoisomerase, found in Cellvibrio japonicus (strain Ueda107) (Pseudomonas fluorescens subsp. cellulosa).